We begin with the raw amino-acid sequence, 480 residues long: MSGILLSNPVNAIPLMNRIRKIHFVGIGGTGMCGIAEILAHEGYCITGSDIVYSSTTRHLFELGVKIFIGHKYSNINNANVIVVSSAIHPNNPEILAAKQARIPVIKRAEMLSELMRFRHGIAISGTHGKTTTTTMIVNIYTAAGLDPTFINGGIVKSEGVHARLGYSRYLIVEADESDNSFLHLHPMVEVITNIDTDHIHEYQGNFEYLKKAFIDFLHNLPFYGYAIVCIDDPVICEILPKIKRKIITYGFNKNANLHIFNYRQHIEKSSFTVSRFNQTKLQVTLNAPGCHNALNATAAIAVATEEGISDKIILKTMLDFQGTHRRFENLGYYSLNKINDQTGEILLIDDYGHHPAELHATIVAIRTGWPDRRLVMVFQPHRYTRIKELYYDFIDVLSNVDILLILHVYSAGEPPILGADSQSLCHAIREFGKINPTFISNTKMLSGALFRLLRNNDLLLIQGAGTIGEVVRRLIVKND.

Gly-126–Thr-132 provides a ligand contact to ATP.

The protein belongs to the MurCDEF family.

It localises to the cytoplasm. It catalyses the reaction UDP-N-acetyl-alpha-D-muramate + L-alanine + ATP = UDP-N-acetyl-alpha-D-muramoyl-L-alanine + ADP + phosphate + H(+). It functions in the pathway cell wall biogenesis; peptidoglycan biosynthesis. Its function is as follows. Cell wall formation. The protein is UDP-N-acetylmuramate--L-alanine ligase of Blochmanniella pennsylvanica (strain BPEN).